A 104-amino-acid chain; its full sequence is Elicitor peptide 6 (104 aa).

A propeptide spanning residues 1–81 (MEVNGEEERR…TVEETGFMAR (81 aa)) is cleaved from the precursor. The span at 48–61 (SSSIPPSSSSSSPS) shows a compositional bias: low complexity. The tract at residues 48–104 (SSSIPPSSSSSSPSLVEEEDSGTETVEETGFMARITAVLRRRPRPPPYSSGRPGQNN) is disordered. Residues 63-74 (VEEEDSGTETVE) are compositionally biased toward acidic residues.

It belongs to the brassicaceae elicitor peptide family.

Functionally, elicitor of plant defense. In Arabidopsis thaliana (Mouse-ear cress), this protein is Elicitor peptide 6 (PEP6).